The primary structure comprises 1923 residues: GREB1-like protein (1923 aa).

The span at 87–96 shows a compositional bias: acidic residues; it reads EDDEDDEEMS. 3 disordered regions span residues 87–111, 246–326, and 1101–1222; these read EDDEDDEEMSDSNSPPIPYSQKPAP, SCHS…GPPK, and RAAV…RGCR. Over residues 252–262 the composition is skewed to low complexity; the sequence is PSSSVSSTVTP. Composition is skewed to polar residues over residues 263–278, 296–307, and 1119–1161; these read ENGTTNGYKSGFTQTD, TPAHTGNYSLSP, and PQSN…SPAT. Over residues 1195-1206 the composition is skewed to low complexity; it reads SSTTSKPSSSSS. Residues 1843 to 1862 form a helical membrane-spanning segment; sequence GVFFSGLLLYLCDSFVGADL.

This sequence belongs to the GREB1 family. In terms of tissue distribution, widely expressed, with prominent expression in the cochlea. Expressed at high levels in fetal kidney. In adult tissues, highest levels in vagina, cervix and epididymis.

It localises to the membrane. Plays a major role in early metanephros and genital development. The polypeptide is GREB1-like protein (GREB1L) (Homo sapiens (Human)).